Here is a 1667-residue protein sequence, read N- to C-terminus: Androglobin (1667 aa).

Positions 1–11 (MASKQTKKKEV) are enriched in basic residues. Disordered stretches follow at residues 1-45 (MASK…KGKF), 347-387 (SLTT…KFSL), and 540-566 (GSDL…ITKA). The Calpain catalytic domain maps to 70–411 (KDKTGKSPVF…SLSDCSSAIQ (342 aa)). The span at 353-384 (APEKSDKVPKEKADARDIGKKRSKDGEKEKFK) shows a compositional bias: basic and acidic residues. The span at 554-566 (THSQTDLSQITKA) shows a compositional bias: polar residues. The region spanning 763-890 (HICSMVSFVI…EEVSLVEWLD (128 aa)) is the Globin; C-terminal part domain. Heme b contacts are provided by Gln-792 and His-824. Residues 906-935 (EVAAAIKIQAMWRGTYVRLLMKARIPDTKE) form the IQ domain. Positions 936–968 (NISVADTLQKVWAVLEMNLEQYAVSLLRLMFKS) constitute a Globin; N-terminal part domain. Disordered regions lie at residues 1297 to 1355 (INLG…QQED) and 1420 to 1522 (TSDA…RSPT). Over residues 1301-1315 (SPDSHTISEGQKSSV) the composition is skewed to polar residues. Basic and acidic residues-rich tracts occupy residues 1325-1340 (EKSS…KQAP) and 1433-1450 (TKPK…KEPN). The segment covering 1451–1468 (SKNSAGSESKEMTQTGSG) has biased composition (polar residues). Positions 1487 to 1498 (STSSESGGVSSP) are enriched in low complexity. Basic and acidic residues predominate over residues 1499 to 1511 (GKEEREQSTRKEN). Residues 1512–1522 (IQTGPRTRSPT) are compositionally biased toward polar residues. Residues 1588-1629 (QEERLKLKDEVLDMYKEMQDSLDEARQKIFDIREEYRNKLLE) are a coiled coil. The segment at 1646–1667 (KLETEKMTPAPDTQKKKKGKKK) is disordered.

In the central section; belongs to the globin family. This sequence in the N-terminal section; belongs to the peptidase C2 family. In terms of assembly, interacts with septin SEPT10; contributes to in vitro proteolytic cleavage of SEPT10 in a calmodulin-dependent manner. Interacts with CFAP69. Interacts with SPEF2. May interact with calmodulin.

The protein localises to the cell projection. The protein resides in the cilium. Its subcellular location is the flagellum. Its function is as follows. Probable chimeric globin with a bis-histidyl six-coordinate heme-iron atom through which it could bind dioxygen, carbon monoxide and nitric oxide. Required for sperm flagellum formation and maturation of elongating spermatids, thus playing an essential role in male fertility. This is Androglobin from Homo sapiens (Human).